Reading from the N-terminus, the 187-residue chain is GTP cyclohydrolase 1 1 (187 aa).

Belongs to the GTP cyclohydrolase I family. In terms of assembly, homomer.

The enzyme catalyses GTP + H2O = 7,8-dihydroneopterin 3'-triphosphate + formate + H(+). The protein operates within cofactor biosynthesis; 7,8-dihydroneopterin triphosphate biosynthesis; 7,8-dihydroneopterin triphosphate from GTP: step 1/1. This is GTP cyclohydrolase 1 1 from Pseudomonas syringae pv. tomato (strain ATCC BAA-871 / DC3000).